A 144-amino-acid chain; its full sequence is Large ribosomal subunit protein uL16 (144 aa).

A compositionally biased stretch (basic residues) spans 1-17; the sequence is MLQPKKTKFRRQQKGRA. Residues 1–22 are disordered; it reads MLQPKKTKFRRQQKGRAKGNAQ.

This sequence belongs to the universal ribosomal protein uL16 family. In terms of assembly, part of the 50S ribosomal subunit.

Binds 23S rRNA and is also seen to make contacts with the A and possibly P site tRNAs. This chain is Large ribosomal subunit protein uL16, found in Bacteroides thetaiotaomicron (strain ATCC 29148 / DSM 2079 / JCM 5827 / CCUG 10774 / NCTC 10582 / VPI-5482 / E50).